A 439-amino-acid polypeptide reads, in one-letter code: tRNA modification GTPase MnmE (439 aa).

3 residues coordinate (6S)-5-formyl-5,6,7,8-tetrahydrofolate: arginine 20, glutamate 78, and lysine 116. The region spanning 211–364 is the TrmE-type G domain; the sequence is GIYVTILGEP…LLNLIKQKVE (154 aa). GTP contacts are provided by residues 221-226, 240-246, and 265-268; these read NSGKST, SEYAGTT, and DTAG. Positions 225 and 246 each coordinate Mg(2+). Lysine 439 serves as a coordination point for (6S)-5-formyl-5,6,7,8-tetrahydrofolate.

The protein belongs to the TRAFAC class TrmE-Era-EngA-EngB-Septin-like GTPase superfamily. TrmE GTPase family. In terms of assembly, homodimer. Heterotetramer of two MnmE and two MnmG subunits. The cofactor is K(+).

Its subcellular location is the cytoplasm. Exhibits a very high intrinsic GTPase hydrolysis rate. Involved in the addition of a carboxymethylaminomethyl (cmnm) group at the wobble position (U34) of certain tRNAs, forming tRNA-cmnm(5)s(2)U34. This Ehrlichia chaffeensis (strain ATCC CRL-10679 / Arkansas) protein is tRNA modification GTPase MnmE.